Reading from the N-terminus, the 141-residue chain is MSEIRLGLVVTEFNREITYAMEELAVQHAKDLGAKVVERVLVPGSFEVPLAVRKLLERDDIDAVVTLGAIIKGDTDHDQAIAQQAFRKIQDLMVEYGKPVALGISGPGMTRMEALERVHYAKRAVEAAVKMVRRLRELEGE.

Residues Phe13, 45–47 (SFE), and 69–71 (AII) each bind 5-amino-6-(D-ribitylamino)uracil. Residue 74–75 (DT) coordinates (2S)-2-hydroxy-3-oxobutyl phosphate. His77 acts as the Proton donor in catalysis. Residue Leu102 coordinates 5-amino-6-(D-ribitylamino)uracil. Arg117 is a (2S)-2-hydroxy-3-oxobutyl phosphate binding site.

Belongs to the DMRL synthase family.

The catalysed reaction is (2S)-2-hydroxy-3-oxobutyl phosphate + 5-amino-6-(D-ribitylamino)uracil = 6,7-dimethyl-8-(1-D-ribityl)lumazine + phosphate + 2 H2O + H(+). Its pathway is cofactor biosynthesis; riboflavin biosynthesis; riboflavin from 2-hydroxy-3-oxobutyl phosphate and 5-amino-6-(D-ribitylamino)uracil: step 1/2. Functionally, catalyzes the formation of 6,7-dimethyl-8-ribityllumazine by condensation of 5-amino-6-(D-ribitylamino)uracil with 3,4-dihydroxy-2-butanone 4-phosphate. This is the penultimate step in the biosynthesis of riboflavin. The polypeptide is 6,7-dimethyl-8-ribityllumazine synthase (Methanopyrus kandleri (strain AV19 / DSM 6324 / JCM 9639 / NBRC 100938)).